A 126-amino-acid polypeptide reads, in one-letter code: Holo-[acyl-carrier-protein] synthase (126 aa).

Mg(2+) contacts are provided by Asp-9 and Glu-58.

This sequence belongs to the P-Pant transferase superfamily. AcpS family. Mg(2+) is required as a cofactor.

The protein resides in the cytoplasm. The enzyme catalyses apo-[ACP] + CoA = holo-[ACP] + adenosine 3',5'-bisphosphate + H(+). Transfers the 4'-phosphopantetheine moiety from coenzyme A to a Ser of acyl-carrier-protein. This is Holo-[acyl-carrier-protein] synthase from Edwardsiella ictaluri (strain 93-146).